The primary structure comprises 396 residues: 8-amino-7-oxononanoate synthase (396 aa).

Arg-19 is a binding site for substrate. Residue 106 to 107 (GY) coordinates pyridoxal 5'-phosphate. His-131 is a binding site for substrate. The pyridoxal 5'-phosphate site is built by Ser-176, His-204, and Thr-233. Lys-236 is subject to N6-(pyridoxal phosphate)lysine. Residue Thr-350 coordinates substrate.

This sequence belongs to the class-II pyridoxal-phosphate-dependent aminotransferase family. BioF subfamily. In terms of assembly, homodimer. It depends on pyridoxal 5'-phosphate as a cofactor.

It carries out the reaction 6-carboxyhexanoyl-[ACP] + L-alanine + H(+) = (8S)-8-amino-7-oxononanoate + holo-[ACP] + CO2. It participates in cofactor biosynthesis; biotin biosynthesis. Catalyzes the decarboxylative condensation of pimeloyl-[acyl-carrier protein] and L-alanine to produce 8-amino-7-oxononanoate (AON), [acyl-carrier protein], and carbon dioxide. The sequence is that of 8-amino-7-oxononanoate synthase from Pseudomonas savastanoi pv. phaseolicola (strain 1448A / Race 6) (Pseudomonas syringae pv. phaseolicola (strain 1448A / Race 6)).